Consider the following 608-residue polypeptide: NADH-quinone oxidoreductase subunit C/D (608 aa).

Residues 1–199 (MSAASSLAPQ…EPFHLSTEKE (199 aa)) form an NADH dehydrogenase I subunit C region. An NADH dehydrogenase I subunit D region spans residues 223–608 (DFMFLNLGPN…IDFVMADVDR (386 aa)).

In the N-terminal section; belongs to the complex I 30 kDa subunit family. This sequence in the C-terminal section; belongs to the complex I 49 kDa subunit family. In terms of assembly, NDH-1 is composed of 13 different subunits. Subunits NuoB, CD, E, F, and G constitute the peripheral sector of the complex.

The protein localises to the cell inner membrane. It carries out the reaction a quinone + NADH + 5 H(+)(in) = a quinol + NAD(+) + 4 H(+)(out). NDH-1 shuttles electrons from NADH, via FMN and iron-sulfur (Fe-S) centers, to quinones in the respiratory chain. The immediate electron acceptor for the enzyme in this species is believed to be ubiquinone. Couples the redox reaction to proton translocation (for every two electrons transferred, four hydrogen ions are translocated across the cytoplasmic membrane), and thus conserves the redox energy in a proton gradient. The polypeptide is NADH-quinone oxidoreductase subunit C/D (Nitrosospira multiformis (strain ATCC 25196 / NCIMB 11849 / C 71)).